A 191-amino-acid polypeptide reads, in one-letter code: Probable protein-S-isoprenylcysteine O-methyltransferase (191 aa).

3 consecutive transmembrane segments (helical) span residues 8–28 (WLFA…AAAF), 45–65 (YVLA…LFPE), and 66–86 (LKEY…GEVI). S-adenosyl-L-methionine contacts are provided by residues 110–113 (HKLI), Tyr-118, and 123–126 (HPGY). The helical transmembrane segment at 129-149 (FLIWAVGTQVMLCNPLSTVAF) threads the bilayer. Residue Arg-160 coordinates substrate. Glu-164 contributes to the S-adenosyl-L-methionine binding site.

The protein belongs to the class VI-like SAM-binding methyltransferase superfamily. Isoprenylcysteine carboxyl methyltransferase family. Requires Zn(2+) as cofactor.

Its subcellular location is the endoplasmic reticulum membrane. The enzyme catalyses [protein]-C-terminal S-[(2E,6E)-farnesyl]-L-cysteine + S-adenosyl-L-methionine = [protein]-C-terminal S-[(2E,6E)-farnesyl]-L-cysteine methyl ester + S-adenosyl-L-homocysteine. In terms of biological role, catalyzes the post-translational methylation of isoprenylated C-terminal cysteine residues. Carboxyl methylation is a reversible and potentially regulated step in the post-translational modification of prenylated proteins. In Oryza sativa subsp. indica (Rice), this protein is Probable protein-S-isoprenylcysteine O-methyltransferase (ICMT).